The following is a 272-amino-acid chain: Pyrroline-5-carboxylate reductase 3 (272 aa).

It belongs to the pyrroline-5-carboxylate reductase family.

It localises to the cytoplasm. It catalyses the reaction L-proline + NADP(+) = (S)-1-pyrroline-5-carboxylate + NADPH + 2 H(+). The enzyme catalyses L-proline + NAD(+) = (S)-1-pyrroline-5-carboxylate + NADH + 2 H(+). The protein operates within amino-acid biosynthesis; L-proline biosynthesis; L-proline from L-glutamate 5-semialdehyde: step 1/1. Functionally, catalyzes the reduction of 1-pyrroline-5-carboxylate (PCA) to L-proline. This is Pyrroline-5-carboxylate reductase 3 (proG) from Bacillus subtilis (strain 168).